We begin with the raw amino-acid sequence, 152 residues long: Ribosome maturation factor RimP (152 aa).

This sequence belongs to the RimP family.

Its subcellular location is the cytoplasm. Functionally, required for maturation of 30S ribosomal subunits. The protein is Ribosome maturation factor RimP of Burkholderia cenocepacia (strain ATCC BAA-245 / DSM 16553 / LMG 16656 / NCTC 13227 / J2315 / CF5610) (Burkholderia cepacia (strain J2315)).